A 334-amino-acid chain; its full sequence is Holliday junction branch migration complex subunit RuvB (334 aa).

Positions 4-184 (ADRLIQPQIQ…FGIPLRLEFY (181 aa)) are large ATPase domain (RuvB-L). ATP is bound by residues Arg24, Gly65, Lys68, Thr69, Thr70, 131–133 (EDY), Arg174, Tyr184, and Arg221. Residue Thr69 participates in Mg(2+) binding. The small ATPAse domain (RuvB-S) stretch occupies residues 185-255 (NIKDLSTIVT…VAEHALDLLD (71 aa)). A head domain (RuvB-H) region spans residues 258-334 (SEGFDYMDRK…YQHFELIKPE (77 aa)). 3 residues coordinate DNA: Arg294, Arg313, and Arg318.

The protein belongs to the RuvB family. In terms of assembly, homohexamer. Forms an RuvA(8)-RuvB(12)-Holliday junction (HJ) complex. HJ DNA is sandwiched between 2 RuvA tetramers; dsDNA enters through RuvA and exits via RuvB. An RuvB hexamer assembles on each DNA strand where it exits the tetramer. Each RuvB hexamer is contacted by two RuvA subunits (via domain III) on 2 adjacent RuvB subunits; this complex drives branch migration. In the full resolvosome a probable DNA-RuvA(4)-RuvB(12)-RuvC(2) complex forms which resolves the HJ.

The protein localises to the cytoplasm. It catalyses the reaction ATP + H2O = ADP + phosphate + H(+). The RuvA-RuvB-RuvC complex processes Holliday junction (HJ) DNA during genetic recombination and DNA repair, while the RuvA-RuvB complex plays an important role in the rescue of blocked DNA replication forks via replication fork reversal (RFR). RuvA specifically binds to HJ cruciform DNA, conferring on it an open structure. The RuvB hexamer acts as an ATP-dependent pump, pulling dsDNA into and through the RuvAB complex. RuvB forms 2 homohexamers on either side of HJ DNA bound by 1 or 2 RuvA tetramers; 4 subunits per hexamer contact DNA at a time. Coordinated motions by a converter formed by DNA-disengaged RuvB subunits stimulates ATP hydrolysis and nucleotide exchange. Immobilization of the converter enables RuvB to convert the ATP-contained energy into a lever motion, pulling 2 nucleotides of DNA out of the RuvA tetramer per ATP hydrolyzed, thus driving DNA branch migration. The RuvB motors rotate together with the DNA substrate, which together with the progressing nucleotide cycle form the mechanistic basis for DNA recombination by continuous HJ branch migration. Branch migration allows RuvC to scan DNA until it finds its consensus sequence, where it cleaves and resolves cruciform DNA. The chain is Holliday junction branch migration complex subunit RuvB from Shewanella baltica (strain OS155 / ATCC BAA-1091).